A 634-amino-acid chain; its full sequence is ABC transporter B family member 29, chloroplastic (634 aa).

A chloroplast-targeting transit peptide spans 1–51 (MSFLLLTPPPCLLIPPPPLSHRRSSSLFLKHPFQPSPRPLSFCKPSALRLR). Transmembrane regions (helical) follow at residues 75-95 (TVLLGWLCSCVSVVSLSQIVP), 119-139 (LVLAGLVLAKVVAYYLQQAFL), 195-215 (LLNTVVPSAIQISVMTAHMIV), 219-239 (ALTLVSAMVIPSVALLIAYLG), 307-327 (IVQVMYLGSLSIFCVGAVILA), and 330-350 (SLSSSAIVSFVASLAFLIDPV). Residues 77–362 (LLGWLCSCVS…LGKAYNELKQ (286 aa)) form the ABC transmembrane type-1 domain. The region spanning 396-633 (VELCDISFKY…KDSLTSAGLV (238 aa)) is the ABC transporter domain. 430-437 (GPSGGGKT) is a binding site for ATP.

It belongs to the ABC transporter superfamily. ABCB family. Multidrug resistance exporter (TC 3.A.1.201) subfamily.

Its subcellular location is the plastid. The protein localises to the chloroplast membrane. The chain is ABC transporter B family member 29, chloroplastic (ABCB29) from Arabidopsis thaliana (Mouse-ear cress).